A 273-amino-acid chain; its full sequence is Light-independent protochlorophyllide reductase iron-sulfur ATP-binding protein (273 aa).

ATP contacts are provided by residues 12-17 (GIGKST) and lysine 41. Serine 16 serves as a coordination point for Mg(2+). [4Fe-4S] cluster contacts are provided by cysteine 97 and cysteine 131. 182-183 (NR) is a binding site for ATP.

This sequence belongs to the NifH/BchL/ChlL family. Homodimer. Protochlorophyllide reductase is composed of three subunits; BchL, BchN and BchB. The cofactor is [4Fe-4S] cluster.

The enzyme catalyses chlorophyllide a + oxidized 2[4Fe-4S]-[ferredoxin] + 2 ADP + 2 phosphate = protochlorophyllide a + reduced 2[4Fe-4S]-[ferredoxin] + 2 ATP + 2 H2O. The protein operates within porphyrin-containing compound metabolism; bacteriochlorophyll biosynthesis (light-independent). Its function is as follows. Component of the dark-operative protochlorophyllide reductase (DPOR) that uses Mg-ATP and reduced ferredoxin to reduce ring D of protochlorophyllide (Pchlide) to form chlorophyllide a (Chlide). This reaction is light-independent. The L component serves as a unique electron donor to the NB-component of the complex, and binds Mg-ATP. The polypeptide is Light-independent protochlorophyllide reductase iron-sulfur ATP-binding protein (Roseiflexus sp. (strain RS-1)).